The chain runs to 495 residues: ATP synthase subunit beta, chloroplastic (495 aa).

Position 172-179 (172-179 (GGAGVGKT)) interacts with ATP.

This sequence belongs to the ATPase alpha/beta chains family. As to quaternary structure, F-type ATPases have 2 components, CF(1) - the catalytic core - and CF(0) - the membrane proton channel. CF(1) has five subunits: alpha(3), beta(3), gamma(1), delta(1), epsilon(1). CF(0) has four main subunits: a(1), b(1), b'(1) and c(9-12).

It localises to the plastid. It is found in the chloroplast thylakoid membrane. It carries out the reaction ATP + H2O + 4 H(+)(in) = ADP + phosphate + 5 H(+)(out). Produces ATP from ADP in the presence of a proton gradient across the membrane. The catalytic sites are hosted primarily by the beta subunits. This is ATP synthase subunit beta, chloroplastic from Convallaria majalis (Lily of the valley).